Here is a 21-residue protein sequence, read N- to C-terminus: Tertiapin (21 aa).

2 disulfide bridges follow: Cys3/Cys14 and Cys5/Cys18.

Post-translationally, oxidation of Met-13 results in the loss of biological activity. An amidation at Lys-21 is suggested in Ref.1. Expressed by the venom gland.

Its subcellular location is the secreted. Presynaptic neurotoxin that blocks the inwardly rectifying Kir1.1/KCNJ1 and Kir3.1/3.4 (KCNJ3/KCNJ5) potassium channels with high affinity by binding to the M1-M2 linker region of these channels in a 1:1 stoichiometry. It may block the potassium channel pore by occluding its alpha helix into the channel vestibule. Tertiapin-Q also inhibits calcium-activated large conductance BK-type (KCNMA) potassium channels in a concentration-, and voltage-dependent manner, in addition to inhibiting Kir3.1/3.2 (KCNJ3/KCNJ6) heteromultimers potassium channels. It can prevent dose-dependently acetylcholine(ACh)-induced atrioventricular blocks in mammalian hearts, as KCNJ3/KCNJ5 channels (also named I(KACh), because these channels are activated by ACh) are found in mammalian myocytes. Interacts specifically with calmodulin in the presence of calcium. The protein is Tertiapin of Apis mellifera (Honeybee).